Reading from the N-terminus, the 308-residue chain is N-acetylmuramic acid 6-phosphate etherase (308 aa).

An SIS domain is found at 62-225 (TAARLRQGGR…STGVMVQLGK (164 aa)). Glutamate 90 functions as the Proton donor in the catalytic mechanism. Glutamate 121 is an active-site residue.

It belongs to the GCKR-like family. MurNAc-6-P etherase subfamily. Homodimer.

The enzyme catalyses N-acetyl-D-muramate 6-phosphate + H2O = N-acetyl-D-glucosamine 6-phosphate + (R)-lactate. The protein operates within amino-sugar metabolism; N-acetylmuramate degradation. Its function is as follows. Specifically catalyzes the cleavage of the D-lactyl ether substituent of MurNAc 6-phosphate, producing GlcNAc 6-phosphate and D-lactate. The sequence is that of N-acetylmuramic acid 6-phosphate etherase from Thermosynechococcus vestitus (strain NIES-2133 / IAM M-273 / BP-1).